Consider the following 216-residue polypeptide: Adenylate kinase (216 aa).

10 to 15 (GAGKGT) contacts ATP. The segment at 30–59 (STGDIFRKNISNKTPLGMEAKSYMDKGQLV) is NMP. Residues Thr31, Arg36, 57-59 (QLV), 85-88 (GFPR), and Gln92 contribute to the AMP site. Positions 126–163 (GRRVCGECGASYHIKFITPKTEGVCDLCGGKLVQRKDD) are LID. Residue Arg127 coordinates ATP. Zn(2+)-binding residues include Cys130 and Cys133. Residue 136-137 (SY) coordinates ATP. Residues Cys150 and Cys153 each coordinate Zn(2+). Residues Arg160 and Arg171 each contribute to the AMP site. Lys199 serves as a coordination point for ATP.

Belongs to the adenylate kinase family. As to quaternary structure, monomer.

The protein resides in the cytoplasm. The catalysed reaction is AMP + ATP = 2 ADP. It functions in the pathway purine metabolism; AMP biosynthesis via salvage pathway; AMP from ADP: step 1/1. In terms of biological role, catalyzes the reversible transfer of the terminal phosphate group between ATP and AMP. Plays an important role in cellular energy homeostasis and in adenine nucleotide metabolism. The chain is Adenylate kinase from Clostridium tetani (strain Massachusetts / E88).